Reading from the N-terminus, the 452-residue chain is MNIVILAAGQGKRMHSNLPKVLHPIAGKPLAQHVIDTARQLSPEKLIVVYGHGGEVVRSTLAAPDLSWAEQAQQLGTGHAVAQALSELGSAAQTLVLYGDVPLTTVATLKRLLQAGKDALSVLTVDLANPSGYGRIVRDGAGNMISIVEEKDASAEQKAIREVNTGIMAVPTARLADWLGKLKNDNAQGEYYLTDIIALAVAEGMPVRTAQPEGEWEVLGVNSKVQLAELERQHQLNLAGELLVAGVRLADPARIDIRGELTHGRDVAIDVGCVFEGKVELADAVEVGPYCVLKNVKVGAGTRIAAFCHFEDAVIGPDGVLGPYARLRPGTELGPEVHIGNFVEVKKSIIGAQSKANHLAYIGDAEIGQRVNVGAGTITCNYDGANKFKTVIEDDVFIGSDTQLVAPVTVGRGATLGAGTTLTKDAPPDALTFSRPRQMTLPGWERPKKVKK.

The pyrophosphorylase stretch occupies residues Met1–Lys224. UDP-N-acetyl-alpha-D-glucosamine-binding positions include Leu6 to Gly9, Lys20, Gln71, Gly76 to Thr77, Tyr98 to Asp100, Gly134, Glu149, Asn164, and Asn222. Asp100 provides a ligand contact to Mg(2+). Asn222 serves as a coordination point for Mg(2+). The interval Val225 to Ala245 is linker. The N-acetyltransferase stretch occupies residues Gly246–Lys452. Residues Arg328 and Lys346 each coordinate UDP-N-acetyl-alpha-D-glucosamine. The active-site Proton acceptor is His358. The UDP-N-acetyl-alpha-D-glucosamine site is built by Tyr361 and Asn372. Residues Ala375, Asn381–Tyr382, Ser400, Ala418, and Arg435 each bind acetyl-CoA.

In the N-terminal section; belongs to the N-acetylglucosamine-1-phosphate uridyltransferase family. The protein in the C-terminal section; belongs to the transferase hexapeptide repeat family. As to quaternary structure, homotrimer. The cofactor is Mg(2+).

It localises to the cytoplasm. The enzyme catalyses alpha-D-glucosamine 1-phosphate + acetyl-CoA = N-acetyl-alpha-D-glucosamine 1-phosphate + CoA + H(+). It carries out the reaction N-acetyl-alpha-D-glucosamine 1-phosphate + UTP + H(+) = UDP-N-acetyl-alpha-D-glucosamine + diphosphate. It participates in nucleotide-sugar biosynthesis; UDP-N-acetyl-alpha-D-glucosamine biosynthesis; N-acetyl-alpha-D-glucosamine 1-phosphate from alpha-D-glucosamine 6-phosphate (route II): step 2/2. The protein operates within nucleotide-sugar biosynthesis; UDP-N-acetyl-alpha-D-glucosamine biosynthesis; UDP-N-acetyl-alpha-D-glucosamine from N-acetyl-alpha-D-glucosamine 1-phosphate: step 1/1. Its pathway is bacterial outer membrane biogenesis; LPS lipid A biosynthesis. Catalyzes the last two sequential reactions in the de novo biosynthetic pathway for UDP-N-acetylglucosamine (UDP-GlcNAc). The C-terminal domain catalyzes the transfer of acetyl group from acetyl coenzyme A to glucosamine-1-phosphate (GlcN-1-P) to produce N-acetylglucosamine-1-phosphate (GlcNAc-1-P), which is converted into UDP-GlcNAc by the transfer of uridine 5-monophosphate (from uridine 5-triphosphate), a reaction catalyzed by the N-terminal domain. The protein is Bifunctional protein GlmU of Dechloromonas aromatica (strain RCB).